The sequence spans 1118 residues: Protein SUPPRESSOR OF NPR1-1 CONSTITUTIVE 4 (1118 aa).

The first 35 residues, 1–35, serve as a signal peptide directing secretion; sequence MNSQQSTRTKQMLQQSSTHLLCGVVLLQLFAAQVD. Residues 36–751 are Extracellular-facing; it reads AQRSTSPWQT…PLRNFLKVIR (716 aa). Residues 51–353 enclose the GP-PDE 1 domain; it reads PLVIARGGFS…DFPLTASASV (303 aa). Residues asparagine 106, asparagine 195, asparagine 251, asparagine 260, asparagine 318, asparagine 335, asparagine 362, asparagine 422, asparagine 433, asparagine 497, asparagine 557, asparagine 573, and asparagine 656 are each glycosylated (N-linked (GlcNAc...) asparagine). Residues 369–670 form the GP-PDE 2 domain; the sequence is FLVISKNGAS…EFPYTAARYK (302 aa). Residues 752–772 form a helical membrane-spanning segment; sequence IVSWSVAGVVLFLVLLTLVFC. The Cytoplasmic segment spans residues 773–1118; the sequence is FHRKRETRLR…SEDVSVYTEG (346 aa). The Protein kinase domain occupies 805–1094; the sequence is KSFAEVVGRG…ALEVPPRPVL (290 aa). Residues 811–819 and lysine 833 each bind ATP; that span reads VGRGGFGIV. Catalysis depends on aspartate 928, which acts as the Proton acceptor.

This sequence in the N-terminal section; belongs to the glycerophosphoryl diester phosphodiesterase family. In the C-terminal section; belongs to the protein kinase superfamily. Ser/Thr protein kinase family. As to expression, expressed in shoots, rosette and cauline leaves, stems, flowers and siliques.

It localises to the cell membrane. The catalysed reaction is a sn-glycero-3-phosphodiester + H2O = an alcohol + sn-glycerol 3-phosphate + H(+). The enzyme catalyses L-seryl-[protein] + ATP = O-phospho-L-seryl-[protein] + ADP + H(+). It carries out the reaction L-threonyl-[protein] + ATP = O-phospho-L-threonyl-[protein] + ADP + H(+). Its function is as follows. Atypical receptor-like kinase involved in disease resistance. The chain is Protein SUPPRESSOR OF NPR1-1 CONSTITUTIVE 4 from Arabidopsis thaliana (Mouse-ear cress).